Consider the following 637-residue polypeptide: 1-deoxy-D-xylulose-5-phosphate synthase (637 aa).

Residues His-76 and 117-119 (GHS) contribute to the thiamine diphosphate site. Position 148 (Asp-148) interacts with Mg(2+). Residues 149–150 (GA), Asn-177, Tyr-294, and Glu-381 contribute to the thiamine diphosphate site. Asn-177 lines the Mg(2+) pocket.

This sequence belongs to the transketolase family. DXPS subfamily. Homodimer. It depends on Mg(2+) as a cofactor. Requires thiamine diphosphate as cofactor.

The enzyme catalyses D-glyceraldehyde 3-phosphate + pyruvate + H(+) = 1-deoxy-D-xylulose 5-phosphate + CO2. It participates in metabolic intermediate biosynthesis; 1-deoxy-D-xylulose 5-phosphate biosynthesis; 1-deoxy-D-xylulose 5-phosphate from D-glyceraldehyde 3-phosphate and pyruvate: step 1/1. Catalyzes the acyloin condensation reaction between C atoms 2 and 3 of pyruvate and glyceraldehyde 3-phosphate to yield 1-deoxy-D-xylulose-5-phosphate (DXP). This chain is 1-deoxy-D-xylulose-5-phosphate synthase, found in Neisseria meningitidis serogroup A / serotype 4A (strain DSM 15465 / Z2491).